A 155-amino-acid chain; its full sequence is Small ribosomal subunit protein uS7c (155 aa).

This sequence belongs to the universal ribosomal protein uS7 family. As to quaternary structure, part of the 30S ribosomal subunit.

The protein localises to the plastid. It localises to the chloroplast. One of the primary rRNA binding proteins, it binds directly to 16S rRNA where it nucleates assembly of the head domain of the 30S subunit. In Cabomba caroliniana (Carolina fanwort), this protein is Small ribosomal subunit protein uS7c (rps7).